The following is a 278-amino-acid chain: Large ribosomal subunit protein uL2 (278 aa).

A disordered region spans residues 222-264; sequence RGVAMNPVDHPHGGGEGRTSGGRNPVTPWGVPTKGKKTRSNKR.

This sequence belongs to the universal ribosomal protein uL2 family. In terms of assembly, part of the 50S ribosomal subunit. Forms a bridge to the 30S subunit in the 70S ribosome.

Its function is as follows. One of the primary rRNA binding proteins. Required for association of the 30S and 50S subunits to form the 70S ribosome, for tRNA binding and peptide bond formation. It has been suggested to have peptidyltransferase activity; this is somewhat controversial. Makes several contacts with the 16S rRNA in the 70S ribosome. The chain is Large ribosomal subunit protein uL2 from Methylobacterium radiotolerans (strain ATCC 27329 / DSM 1819 / JCM 2831 / NBRC 15690 / NCIMB 10815 / 0-1).